Reading from the N-terminus, the 750-residue chain is Photosystem I P700 chlorophyll a apoprotein A1 (750 aa).

Helical transmembrane passes span 70–93 (IFSAHFGQLSIIFLWLSGMYFHGA), 156–179 (LYCTAIGALVFAALMLFAGWFHYH), 195–219 (LNHHLAGLLGLGSLSWAGHQIHVSL), 291–309 (TAHHHLAIAILFLIAGHMY), 346–369 (WHAQLALNLAMLGSLTIVVAHHMY), 385–411 (LSLFTHHMWIGGFLIVGAAAHAAIFMV), 433–455 (AIISHLNWACIFLGFHSFGLYIH), and 531–549 (FLVHHIHAFTIHVTVLILL). The [4Fe-4S] cluster site is built by Cys-573 and Cys-582. 2 helical membrane-spanning segments follow: residues 589–610 (HVFLGLFWMYNSISVVIFHFSW) and 664–686 (LSAYGLFFLGAHFVWAFSLMFLF). Chlorophyll a' is bound at residue His-675. Positions 683 and 691 each coordinate chlorophyll a. Trp-692 contributes to the phylloquinone binding site. A helical transmembrane segment spans residues 724-744 (AVGVTHYLLGGIATTWAFFLA).

This sequence belongs to the PsaA/PsaB family. The PsaA/B heterodimer binds the P700 chlorophyll special pair and subsequent electron acceptors. PSI consists of a core antenna complex that captures photons, and an electron transfer chain that converts photonic excitation into a charge separation. The eukaryotic PSI reaction center is composed of at least 11 subunits. P700 is a chlorophyll a/chlorophyll a' dimer, A0 is one or more chlorophyll a, A1 is one or both phylloquinones and FX is a shared 4Fe-4S iron-sulfur center. is required as a cofactor.

Its subcellular location is the plastid. It localises to the chloroplast thylakoid membrane. The catalysed reaction is reduced [plastocyanin] + hnu + oxidized [2Fe-2S]-[ferredoxin] = oxidized [plastocyanin] + reduced [2Fe-2S]-[ferredoxin]. Functionally, psaA and PsaB bind P700, the primary electron donor of photosystem I (PSI), as well as the electron acceptors A0, A1 and FX. PSI is a plastocyanin-ferredoxin oxidoreductase, converting photonic excitation into a charge separation, which transfers an electron from the donor P700 chlorophyll pair to the spectroscopically characterized acceptors A0, A1, FX, FA and FB in turn. Oxidized P700 is reduced on the lumenal side of the thylakoid membrane by plastocyanin. The protein is Photosystem I P700 chlorophyll a apoprotein A1 of Spinacia oleracea (Spinach).